Here is a 132-residue protein sequence, read N- to C-terminus: Protein LEKR1 (132 aa).

Residues 37–116 adopt a coiled-coil conformation; the sequence is FKAMEEKVKA…KKQLSHLQDE (80 aa).

The protein is Protein LEKR1 (LEKR1) of Homo sapiens (Human).